We begin with the raw amino-acid sequence, 256 residues long: Homeobox protein goosecoid (256 aa).

A DNA-binding region (homeobox) is located at residues 160 to 219 (KRRHRTIFTDEQLEALENLFQETKYPDVGTREQLARKVHLREEKVEVWFKNRRAKWRRQK). Residues 213–256 (AKWRRQKRSSSEESENAEKWNKTSSKASPEKREEEGKSDLDSDS) are disordered. The span at 240-256 (SPEKREEEGKSDLDSDS) shows a compositional bias: basic and acidic residues.

This sequence belongs to the paired homeobox family. Bicoid subfamily. In early gastrulation, expressed in the dorsal lip. In later stages of development found in head, limbs and body wall. In the embryo, expressed in the postotic cranial neural crest cells, the frontonasal prominence, the first branchial arch and cleft, and specific regions of large joints.

The protein resides in the nucleus. Regulates chordin (CHRD). May play a role in spatial programing within discrete embryonic fields or lineage compartments during organogenesis. In concert with NKX3-2, plays a role in defining the structural components of the middle ear; required for the development of the entire tympanic ring. Goosecoid-expressing regions of the gastrulating mouse egg cylinder have organizer-like activity when transplanted into Xenopus embryos. Probably involved in the regulatory networks that define neural crest cell fate specification and determine mesoderm cell lineages in mammals. In Mus musculus (Mouse), this protein is Homeobox protein goosecoid (Gsc).